The sequence spans 94 residues: Small ribosomal subunit protein uS19 (94 aa).

This sequence belongs to the universal ribosomal protein uS19 family.

In terms of biological role, protein S19 forms a complex with S13 that binds strongly to the 16S ribosomal RNA. The protein is Small ribosomal subunit protein uS19 of Halothermothrix orenii (strain H 168 / OCM 544 / DSM 9562).